An 828-amino-acid polypeptide reads, in one-letter code: Glycerol-3-phosphate acyltransferase (828 aa).

The HXXXXD motif motif lies at 309–314; the sequence is CHRSHI.

This sequence belongs to the GPAT/DAPAT family.

The protein localises to the cell inner membrane. It carries out the reaction sn-glycerol 3-phosphate + an acyl-CoA = a 1-acyl-sn-glycero-3-phosphate + CoA. It functions in the pathway phospholipid metabolism; CDP-diacylglycerol biosynthesis; CDP-diacylglycerol from sn-glycerol 3-phosphate: step 1/3. The polypeptide is Glycerol-3-phosphate acyltransferase (Pseudomonas entomophila (strain L48)).